The following is a 417-amino-acid chain: Caveolae-associated protein 2 (417 aa).

Residues 1 to 42 form a disordered region; that stretch reads MGEDAAQAEKFQHPNTDMLQEKPSNPSPMPSSTPSPSLNLGS. G2 bears the N-acetylglycine mark. The interval 2–168 is interaction with CAVIN1; sequence GEDAAQAEKF…IFQEESEIPA (167 aa). S27, S35, S37, and S51 each carry phosphoserine. Coiled-coil stretches lie at residues 61–87 and 126–267; these read LLDK…INLE and RAVR…VERR. Residues 62 to 100 form a leucine-zipper region; it reads LDKLVNMLDAVRENQHNMEQRQINLEGSVKGIQNDLTKL. Position 195 is a phosphothreonine (T195). Disordered stretches follow at residues 198–242 and 256–381; these read NVDL…DSLK and KLGT…ALQQ. S202, S203, and S217 each carry phosphoserine. Over residues 202–218 the composition is skewed to acidic residues; it reads SSDDELPGDEEALEDSA. The span at 219 to 242 shows a compositional bias: basic and acidic residues; that stretch reads EEKMEESRAEKIKRSSLKKVDSLK. Polar residues predominate over residues 274–286; it reads LTPNHQKASSGKS. Residues S282, S283, S286, S287, S292, and S295 each carry the phosphoserine modification. Residues 302 to 320 are compositionally biased toward basic and acidic residues; that stretch reads REGESSAENETKLEEQVQD. Phosphoserine occurs at positions 326, 335, 358, and 362. The segment covering 354–365 has biased composition (polar residues); sequence RGNNSGVGSNAD. T367 is subject to Phosphothreonine. Over residues 367–376 the composition is skewed to acidic residues; that stretch reads TIEEDEEEES. Y387 carries the post-translational modification Phosphotyrosine. 2 positions are modified to phosphoserine: S389 and S395.

Belongs to the CAVIN family. In terms of assembly, component of the CAVIN complex composed of CAVIN1, CAVIN2, CAVIN3 and CAVIN. Interacts with CAVIN4; this augments the transactivation of NPPA by CAVIN4. Binds to PRKCA in the presence of phosphatidylserine. Interacts with CAVIN1 and CAV3. The N-terminus is blocked. In terms of processing, phosphorylated on Ser residues.

The protein resides in the cytoplasm. It localises to the cytosol. The protein localises to the membrane. It is found in the caveola. Plays an important role in caveolar biogenesis and morphology. Regulates caveolae morphology by inducing membrane curvature within caveolae. Plays a role in caveola formation in a tissue-specific manner. Required for the formation of caveolae in the lung and fat endothelia but not in the heart endothelia. Negatively regulates the size or stability of CAVIN complexes in the lung endothelial cells. May play a role in targeting PRKCA to caveolae. This is Caveolae-associated protein 2 from Rattus norvegicus (Rat).